A 234-amino-acid polypeptide reads, in one-letter code: Large ribosomal subunit protein uL1 (234 aa).

This sequence belongs to the universal ribosomal protein uL1 family. As to quaternary structure, part of the 50S ribosomal subunit.

Functionally, binds directly to 23S rRNA. The L1 stalk is quite mobile in the ribosome, and is involved in E site tRNA release. Its function is as follows. Protein L1 is also a translational repressor protein, it controls the translation of the L11 operon by binding to its mRNA. The protein is Large ribosomal subunit protein uL1 of Pectobacterium carotovorum subsp. carotovorum (strain PC1).